Here is a 54-residue protein sequence, read N- to C-terminus: Large ribosomal subunit protein bL33 (54 aa).

The protein belongs to the bacterial ribosomal protein bL33 family.

The sequence is that of Large ribosomal subunit protein bL33 from Legionella pneumophila (strain Lens).